The sequence spans 908 residues: Metabotropic glutamate receptor 8 (908 aa).

The first 33 residues, 1-33 (MVCEGKRSTSCPCFFLLTAKFYWILTMMQRTHS), serve as a signal peptide directing secretion. Over 34–583 (QEYAHSIRLD…IIKLEWHSPW (550 aa)) the chain is Extracellular. A disulfide bridge connects residues C64 and C106. Residue N95 is glycosylated (N-linked (GlcNAc...) asparagine). L-glutamate-binding positions include S156, 177–179 (AST), and Y227. Intrachain disulfides connect C246–C534, C369–C384, C424–C431, C516–C535, C520–C538, C541–C553, and C556–C569. Residue N298 is glycosylated (N-linked (GlcNAc...) asparagine). D309 serves as a coordination point for L-glutamate. K401 provides a ligand contact to L-glutamate. Residues N452 and N480 are each glycosylated (N-linked (GlcNAc...) asparagine). N565 is a glycosylation site (N-linked (GlcNAc...) asparagine). Residues 584–608 (AVVPVFIAILGIIATTFVIVTFVRY) traverse the membrane as a helical segment. The Cytoplasmic segment spans residues 609–620 (NDTPIVRASGRE). The chain crosses the membrane as a helical span at residues 621–641 (LSYVLLTGIFLCYSITFLMIA). The Extracellular segment spans residues 642-647 (APDTII). Residues 648–668 (CSFRRIFLGLGMCFSYAALLT) traverse the membrane as a helical segment. Over 669 to 695 (KTNRIHRIFEQGKKSVTAPKFISPASQ) the chain is Cytoplasmic. A helical membrane pass occupies residues 696-716 (LVITFSLISVQLLGVFVWFVV). The Extracellular segment spans residues 717–746 (DPPHTIIDYGEQRTLDPENARGVLKCDISD). Residues 747 to 768 (LSLICSLGYSILLMVTCTVYAI) form a helical membrane-spanning segment. The Cytoplasmic segment spans residues 769 to 781 (KTRGVPETFNEAK). A helical membrane pass occupies residues 782–803 (PIGFTMYTTCIIWLAFIPIFFG). The Extracellular segment spans residues 804-818 (TAQSAEKMYIQTTTL). The chain crosses the membrane as a helical span at residues 819–843 (TVSMSLSASVSLGMLYMPKVYIIIF). Residues 844 to 908 (HPEQNVQKRK…TYISYSNHSI (65 aa)) lie on the Cytoplasmic side of the membrane. A Glycyl lysine isopeptide (Lys-Gly) (interchain with G-Cter in SUMO1) cross-link involves residue K882.

The protein belongs to the G-protein coupled receptor 3 family. As to quaternary structure, interacts with PICK1. Strongly expressed in olfactory bulb, accessory olfactory bulb, and mammillary body. Weaker expression in the retina, and in scattered cells in the cortex and hindbrain.

Its subcellular location is the cell membrane. Functionally, G-protein coupled receptor for glutamate. Ligand binding causes a conformation change that triggers signaling via guanine nucleotide-binding proteins (G proteins) and modulates the activity of down-stream effectors. Signaling inhibits adenylate cyclase activity. The polypeptide is Metabotropic glutamate receptor 8 (Grm8) (Mus musculus (Mouse)).